The primary structure comprises 872 residues: F-box protein pof6 (872 aa).

The F-box domain occupies 30 to 75 (FGCLTINIYLKIFTLISTPDLCNCRLVCRKFQQLCDYNSIYVKKLL). Residues 101 to 122 (MSSNTSKGFHLQSSDKKYADSD) form a disordered region. A compositionally biased stretch (basic and acidic residues) spans 113–122 (SSDKKYADSD).

As to quaternary structure, interacts with skp1. Forms a complex with pof6 and skp1.

Its subcellular location is the cytoplasm. The protein localises to the nucleus. In terms of biological role, together with skp1, essential for septum processing and cell separation. This is F-box protein pof6 (pof6) from Schizosaccharomyces pombe (strain 972 / ATCC 24843) (Fission yeast).